The chain runs to 339 residues: GTPase Obg (339 aa).

One can recognise an Obg domain in the interval 1 to 158; the sequence is MKFLDQVDLR…RDLTFELKLM (158 aa). 2 disordered regions span residues 66–86 and 125–148; these read FAED…GEDK and GNAF…PGEE. Positions 72 to 86 are enriched in basic and acidic residues; sequence PGGRREQTGASGEDK. Over residues 129 to 138 the composition is skewed to polar residues; it reads FKSSTNQAPR. Residues 159–329 form the OBG-type G domain; it reads ADVGLVGFPN…LKYTLFDTVH (171 aa). GTP-binding positions include 165 to 172, 190 to 194, 212 to 215, 279 to 282, and 310 to 312; these read GFPNAGKS, FTTLT, DIPG, SKID, and SAV. Mg(2+)-binding residues include Ser172 and Thr192.

It belongs to the TRAFAC class OBG-HflX-like GTPase superfamily. OBG GTPase family. Monomer. It depends on Mg(2+) as a cofactor.

The protein resides in the cytoplasm. Functionally, an essential GTPase which binds GTP, GDP and possibly (p)ppGpp with moderate affinity, with high nucleotide exchange rates and a fairly low GTP hydrolysis rate. Plays a role in control of the cell cycle, stress response, ribosome biogenesis and in those bacteria that undergo differentiation, in morphogenesis control. This Salinibacter ruber (strain DSM 13855 / M31) protein is GTPase Obg.